A 283-amino-acid polypeptide reads, in one-letter code: 2-dehydro-3-deoxyphosphooctonate aldolase (283 aa).

The protein belongs to the KdsA family.

It is found in the cytoplasm. It catalyses the reaction D-arabinose 5-phosphate + phosphoenolpyruvate + H2O = 3-deoxy-alpha-D-manno-2-octulosonate-8-phosphate + phosphate. Its pathway is carbohydrate biosynthesis; 3-deoxy-D-manno-octulosonate biosynthesis; 3-deoxy-D-manno-octulosonate from D-ribulose 5-phosphate: step 2/3. It participates in bacterial outer membrane biogenesis; lipopolysaccharide biosynthesis. The protein is 2-dehydro-3-deoxyphosphooctonate aldolase of Parasynechococcus marenigrum (strain WH8102).